Consider the following 469-residue polypeptide: Probable Xaa-Pro aminopeptidase PEPP (469 aa).

Mn(2+)-binding residues include Asp264, Asp275, Glu398, and Glu438.

This sequence belongs to the peptidase M24B family. Requires Mn(2+) as cofactor.

The catalysed reaction is Release of any N-terminal amino acid, including proline, that is linked to proline, even from a dipeptide or tripeptide.. In terms of biological role, catalyzes the removal of a penultimate prolyl residue from the N-termini of peptides. The sequence is that of Probable Xaa-Pro aminopeptidase PEPP (PEPP) from Ajellomyces capsulatus (strain H143) (Darling's disease fungus).